The following is a 571-amino-acid chain: Protein tesmin/TSO1-like CXC 6 (571 aa).

Disordered stretches follow at residues 1–52, 92–119, 293–325, 370–411, and 507–571; these read MGEG…AAAS, IRHP…QKKK, NQGT…GGNA, LANQ…RSLS, and NGVS…KKDL. Basic and acidic residues predominate over residues 7-16; sequence GDKFPPKTDE. The CRC domain occupies 117 to 241; sequence KKKQCNCKHS…KCLDCKNFEG (125 aa). 3 stretches are compositionally biased toward polar residues: residues 293-319, 373-388, and 508-539; these read NQGT…QTGS, QKET…QGHV, and GVSQ…QTAK. The span at 540–557 shows a compositional bias: low complexity; the sequence is QPSQLTTTTTTPNTSSQT.

It belongs to the lin-54 family. As to expression, ubiquitous but expressed mostly in flowers.

Its subcellular location is the nucleus. Plays a role in development of both male and female reproductive tissues. In Arabidopsis thaliana (Mouse-ear cress), this protein is Protein tesmin/TSO1-like CXC 6 (TCX6).